Consider the following 324-residue polypeptide: Probable metal transport system membrane protein CPn_0346/CP_0414/CPj0346/CpB0353 (324 aa).

The next 10 membrane-spanning stretches (helical) occupy residues Met1–Phe21, Ile39–Val59, Ala64–Phe84, Gly94–Ile114, Ser125–Thr145, Glu165–Phe185, Leu201–Val221, Ala226–Ile246, Ser252–Ser272, and Ser286–Phe306.

The protein belongs to the ABC-3 integral membrane protein family.

The protein localises to the cell inner membrane. In terms of biological role, part of an ATP-driven transport system CPn_0346/CPn_0347/CPn_0348/CPn_0349 for a metal. This Chlamydia pneumoniae (Chlamydophila pneumoniae) protein is Probable metal transport system membrane protein CPn_0346/CP_0414/CPj0346/CpB0353.